Here is a 292-residue protein sequence, read N- to C-terminus: Phosphatidylserine decarboxylase proenzyme (292 aa).

Residues Asp-89, His-146, and Ser-252 each act as charge relay system; for autoendoproteolytic cleavage activity in the active site. The active-site Schiff-base intermediate with substrate; via pyruvic acid; for decarboxylase activity is the Ser-252. Residue Ser-252 is modified to Pyruvic acid (Ser); by autocatalysis.

This sequence belongs to the phosphatidylserine decarboxylase family. PSD-B subfamily. Prokaryotic type I sub-subfamily. As to quaternary structure, heterodimer of a large membrane-associated beta subunit and a small pyruvoyl-containing alpha subunit. Requires pyruvate as cofactor. Is synthesized initially as an inactive proenzyme. Formation of the active enzyme involves a self-maturation process in which the active site pyruvoyl group is generated from an internal serine residue via an autocatalytic post-translational modification. Two non-identical subunits are generated from the proenzyme in this reaction, and the pyruvate is formed at the N-terminus of the alpha chain, which is derived from the carboxyl end of the proenzyme. The autoendoproteolytic cleavage occurs by a canonical serine protease mechanism, in which the side chain hydroxyl group of the serine supplies its oxygen atom to form the C-terminus of the beta chain, while the remainder of the serine residue undergoes an oxidative deamination to produce ammonia and the pyruvoyl prosthetic group on the alpha chain. During this reaction, the Ser that is part of the protease active site of the proenzyme becomes the pyruvoyl prosthetic group, which constitutes an essential element of the active site of the mature decarboxylase.

Its subcellular location is the cell membrane. It carries out the reaction a 1,2-diacyl-sn-glycero-3-phospho-L-serine + H(+) = a 1,2-diacyl-sn-glycero-3-phosphoethanolamine + CO2. Its pathway is phospholipid metabolism; phosphatidylethanolamine biosynthesis; phosphatidylethanolamine from CDP-diacylglycerol: step 2/2. Functionally, catalyzes the formation of phosphatidylethanolamine (PtdEtn) from phosphatidylserine (PtdSer). The chain is Phosphatidylserine decarboxylase proenzyme from Shewanella sp. (strain ANA-3).